Here is a 690-residue protein sequence, read N- to C-terminus: Elongation factor G (690 aa).

Residues E8–V283 enclose the tr-type G domain. GTP contacts are provided by residues A17–T24, D81–H85, and N135–D138.

It belongs to the TRAFAC class translation factor GTPase superfamily. Classic translation factor GTPase family. EF-G/EF-2 subfamily.

Its subcellular location is the cytoplasm. Functionally, catalyzes the GTP-dependent ribosomal translocation step during translation elongation. During this step, the ribosome changes from the pre-translocational (PRE) to the post-translocational (POST) state as the newly formed A-site-bound peptidyl-tRNA and P-site-bound deacylated tRNA move to the P and E sites, respectively. Catalyzes the coordinated movement of the two tRNA molecules, the mRNA and conformational changes in the ribosome. This is Elongation factor G from Rhodopseudomonas palustris (strain HaA2).